The sequence spans 320 residues: UDP-3-O-acyl-N-acetylglucosamine deacetylase (320 aa).

3 residues coordinate Zn(2+): H92, H251, and D255. H278 (proton donor) is an active-site residue.

This sequence belongs to the LpxC family. The cofactor is Zn(2+).

The enzyme catalyses a UDP-3-O-[(3R)-3-hydroxyacyl]-N-acetyl-alpha-D-glucosamine + H2O = a UDP-3-O-[(3R)-3-hydroxyacyl]-alpha-D-glucosamine + acetate. It functions in the pathway glycolipid biosynthesis; lipid IV(A) biosynthesis; lipid IV(A) from (3R)-3-hydroxytetradecanoyl-[acyl-carrier-protein] and UDP-N-acetyl-alpha-D-glucosamine: step 2/6. Catalyzes the hydrolysis of UDP-3-O-myristoyl-N-acetylglucosamine to form UDP-3-O-myristoylglucosamine and acetate, the committed step in lipid A biosynthesis. This chain is UDP-3-O-acyl-N-acetylglucosamine deacetylase, found in Psychrobacter arcticus (strain DSM 17307 / VKM B-2377 / 273-4).